A 177-amino-acid polypeptide reads, in one-letter code: Large ribosomal subunit protein uL6 (177 aa).

The protein belongs to the universal ribosomal protein uL6 family. As to quaternary structure, part of the 50S ribosomal subunit.

In terms of biological role, this protein binds to the 23S rRNA, and is important in its secondary structure. It is located near the subunit interface in the base of the L7/L12 stalk, and near the tRNA binding site of the peptidyltransferase center. The sequence is that of Large ribosomal subunit protein uL6 from Bordetella bronchiseptica (strain ATCC BAA-588 / NCTC 13252 / RB50) (Alcaligenes bronchisepticus).